We begin with the raw amino-acid sequence, 1159 residues long: Phosphatidylinositol 3-kinase age-1 (1159 aa).

The span at 1 to 25 shows a compositional bias: polar residues; that stretch reads MSMGRSSSTTFRNRTASHGSRSLGS. The interval 1 to 28 is disordered; sequence MSMGRSSSTTFRNRTASHGSRSLGSAET. Residues 79–179 enclose the PI3K-ABD domain; that stretch reads SEGVADMIVL…FPMLFLFEPD (101 aa). One can recognise a PI3K-RBD domain in the interval 272-363; that stretch reads RKSEANEVWE…YRCPGFVVRR (92 aa). The C2 PI3K-type domain occupies 430 to 588; sequence LDSNLMIRPV…VKMPNEAQYK (159 aa). Residues 607 to 793 form the PIK helical domain; that stretch reads DYEACIGDPG…SLLMEAYLRG (187 aa). Positions 858-1159 constitute a PI3K/PI4K catalytic domain; it reads VIEKAIVLGS…NWLFHAMKHY (302 aa). The segment at 864-870 is G-loop; it reads VLGSAKQ. The catalytic loop stretch occupies residues 1028–1036; the sequence is GIKDRHSDN. The segment at 1047 to 1073 is activation loop; the sequence is HIDFGHILGHGKTKLGIQRDRQPFILT.

This sequence belongs to the PI3/PI4-kinase family.

It catalyses the reaction a 1,2-diacyl-sn-glycero-3-phospho-(1D-myo-inositol) + ATP = a 1,2-diacyl-sn-glycero-3-phospho-(1D-myo-inositol-3-phosphate) + ADP + H(+). In terms of biological role, phosphatidylinositol 3-kinase homolog that regulates longevity and diapause. Promotes cell survival during embryonic development by recruiting akt-1/2 to the plasma membrane through the production of PtdIns(3,4,5)P3. Could function in the development or neuroendocrine signaling of the dauer pathway. Mediates susceptibility to enteropathogenic E.coli infection. May negatively regulate AYI interneuron neurite outgrowth. Plays a role in aversive olfactory learning when an odor is associated with food deprivation. Regulates this process by promoting the nuclear relocalization of egl-4 in AWC olfactory neurons after odor conditioning. This chain is Phosphatidylinositol 3-kinase age-1 (age-1), found in Caenorhabditis briggsae.